The primary structure comprises 566 residues: Proline--tRNA ligase (566 aa).

The protein belongs to the class-II aminoacyl-tRNA synthetase family. ProS type 1 subfamily. In terms of assembly, homodimer.

It is found in the cytoplasm. It carries out the reaction tRNA(Pro) + L-proline + ATP = L-prolyl-tRNA(Pro) + AMP + diphosphate. Catalyzes the attachment of proline to tRNA(Pro) in a two-step reaction: proline is first activated by ATP to form Pro-AMP and then transferred to the acceptor end of tRNA(Pro). As ProRS can inadvertently accommodate and process non-cognate amino acids such as alanine and cysteine, to avoid such errors it has two additional distinct editing activities against alanine. One activity is designated as 'pretransfer' editing and involves the tRNA(Pro)-independent hydrolysis of activated Ala-AMP. The other activity is designated 'posttransfer' editing and involves deacylation of mischarged Ala-tRNA(Pro). The misacylated Cys-tRNA(Pro) is not edited by ProRS. The polypeptide is Proline--tRNA ligase (Shouchella clausii (strain KSM-K16) (Alkalihalobacillus clausii)).